Reading from the N-terminus, the 622-residue chain is MNKFFSFPILGLLLTCVRFVVAKERLFEWNVTDVYDVDPDGSGNSRWVIGVNNKWPIDPLVVDYGDQVIIKMTNSLANNRTTSLHSHGLFQKFTPYMDGVPQSTQCEIPPGATFYYNYTALQNGTYWVHSHDMSQYPDGLRTPFIINALEEPYDYDEEYIISMTDWYYTPFNILVPDEFKTWKNPTGAEPVPDTGLFNDTANATFAMEPGKTYRLRFINIGAFNNYDVMIEDHNMTIIEVDGEYTEPQEVSSIHLTVAQRYSVLVTAKNSTDRNYAITAYMDESLFDTIPDNYNPNVTAWLSYNSDASYDLGPDIDEIDSYDDAELNPLYSWDVTESNHSINIWFDFFTLGDGANYAEINDSSYVFPKVPSIMIANSTNVDGYNLEPVTYGPYTNAYIFEYGDVVDVIIDNHDTGKHPFHLHGHTFQVLERGEENAGLYSDQESHTYYDNPMRRDTVEIEPGSFIVIRFIADNPGAWVIHCHIEWHMESGLLATFIEAPEMIPSISSPDFVKEQCMLDGVPTIGNGAGNYKNISDLSGAPSPPGEMPAGWTSKAIGTMAACVISACIGMGSIIFYGASIHPVPTEELDENDDLQEAALENAAMFLDTDKAVEKVVEGKDEIK.

The first 22 residues, 1–22 (MNKFFSFPILGLLLTCVRFVVA), serve as a signal peptide directing secretion. Topologically, residues 23–553 (KERLFEWNVT…GEMPAGWTSK (531 aa)) are extracellular. Residues N30 and N79 are each glycosylated (N-linked (GlcNAc...) asparagine). Plastocyanin-like domains follow at residues 49-147 (IGVN…FIIN) and 194-304 (TGLF…LSYN). Cu cation-binding residues include H85 and H87. N-linked (GlcNAc...) asparagine glycans are attached at residues N117 and N123. The Cu cation site is built by H129 and H131. 8 N-linked (GlcNAc...) asparagine glycosylation sites follow: N198, N202, N234, N269, N296, N338, N360, and N376. The Plastocyanin-like 3 domain occupies 386–498 (EPVTYGPYTN…SGLLATFIEA (113 aa)). Residues H417, H420, H422, H480, C481, H482, and H486 each coordinate Cu cation. An N-linked (GlcNAc...) asparagine glycan is attached at N532. A helical transmembrane segment spans residues 554-574 (AIGTMAACVISACIGMGSIIF). Over 575-622 (YGASIHPVPTEELDENDDLQEAALENAAMFLDTDKAVEKVVEGKDEIK) the chain is Cytoplasmic.

This sequence belongs to the multicopper oxidase family. Requires Cu cation as cofactor.

The protein resides in the cell membrane. In terms of biological role, could be an iron transport multicopper oxidase, which is required for Fe(2+) high affinity uptake. May be required to oxidize Fe(2+) and release it from the transporter. Essential component of copper-dependent iron transport. This Schizosaccharomyces pombe (strain 972 / ATCC 24843) (Fission yeast) protein is Iron transport multicopper oxidase fio1 (fio1).